A 263-amino-acid chain; its full sequence is L-histidine 2-aminobutanoyltransferase (263 aa).

This sequence belongs to the methyltransferase superfamily. CntL family.

The enzyme catalyses L-histidine + S-adenosyl-L-methionine = (2S)-2-amino-4-{[(1S)-1-carboxy-2-(1H-imidazol-4-yl)ethyl]amino}butanoate + S-methyl-5'-thioadenosine + H(+). In terms of biological role, catalyzes the nucleophilic attack of one alpha-aminobutanoate moiety from SAM onto L-histidine to produce the intermediate (2S)-2-amino-4-{[(1S)-1-carboxy-2-(1H-imidazol-4-yl)ethyl]amino}butanoate. Functions in the biosynthesis of the metallophore pseudopaline, which is involved in the acquisition of nickel and zinc, and thus enables bacterial growth inside the host, where metal access is limited. Therefore, this enzyme probably contributes to Pseudomonas virulence. Appears to be specific for L-histidine as substrate. The sequence is that of L-histidine 2-aminobutanoyltransferase from Pseudomonas aeruginosa (strain ATCC 15692 / DSM 22644 / CIP 104116 / JCM 14847 / LMG 12228 / 1C / PRS 101 / PAO1).